We begin with the raw amino-acid sequence, 622 residues long: Sodium-coupled monocarboxylate transporter 1 (622 aa).

Topologically, residues 1–15 (MVTPGNIGSFTVWDY) are extracellular. The chain crosses the membrane as a helical span at residues 16 to 36 (LVFALMLLISAVIGIYYAFAG). Residues 37–51 (GGQKTSKDFLMGGRS) lie on the Cytoplasmic side of the membrane. A helical membrane pass occupies residues 52–72 (MTAVPVALSLTASFMSAVTVL). The Extracellular segment spans residues 73–83 (GTPAEVYRFGA). A helical membrane pass occupies residues 84–104 (MFIIFAFSYTIVVIISSEVFL). The Cytoplasmic portion of the chain corresponds to 105–128 (PVFYRLGITSTYEYLELRFNKFVR). Residues 129-149 (LLGTILFIIQTVLYTGIVIYA) form a helical membrane-spanning segment. Over 150–161 (PALALNQVTGFD) the chain is Extracellular. The chain crosses the membrane as a helical span at residues 162–182 (LWGAVVATGVVCTFYCTMGGL). The Cytoplasmic portion of the chain corresponds to 183 to 184 (KA). Residues 185–205 (VVWTDVFQVGIMVAGFTSVII) form a helical membrane-spanning segment. Residues 206-241 (RAVVVQGGIGPILNDSYYGDRLNFWDFDPNPLKRHT) lie on the Extracellular side of the membrane. A glycan (N-linked (GlcNAc...) asparagine) is linked at Asn219. Residues 242 to 262 (FWTIVVGGTFTWTGIYGVNQA) traverse the membrane as a helical segment. Over 263–283 (QVQRYIACKTRFQAKMSLYVN) the chain is Cytoplasmic. A helical membrane pass occupies residues 284 to 304 (LIGLWAILACAVLSGLAMYSI). The Extracellular segment spans residues 305–336 (YKDCDPWTAKFVSAPDQLMPYLALDILRDYPG). A helical membrane pass occupies residues 337–357 (LPGLFVSCAYSGTLSTVSSSI). The Cytoplasmic portion of the chain corresponds to 358–389 (NALAAVTVEDLIKPYIRSLSEKKMSWISKGTS). A helical membrane pass occupies residues 390 to 410 (LLYGAICIGMAGIASLMGGLL). Residues 411–415 (QAALS) are Extracellular-facing. The chain crosses the membrane as a helical span at residues 416 to 436 (IFGMVGGPLLGLFSLGILFPF). The Cytoplasmic portion of the chain corresponds to 437-438 (VN). The chain crosses the membrane as a helical span at residues 439 to 459 (SLGAVIGLLSGFAISLWVGIG). The Extracellular segment spans residues 460-521 (SQIYAPSPSS…LADSWYSLSY (62 aa)). 2 N-linked (GlcNAc...) asparagine glycosylation sites follow: Asn481 and Asn488. Residues 522-542 (LYFSTIGTIVAVLVGVIVSLL) traverse the membrane as a helical segment. The Cytoplasmic portion of the chain corresponds to 543-622 (SGGLKQNVNR…KGEKTNGITA (80 aa)). The interval 591-622 (DNDMEQGTDNPAFNNMEMTSTEKGEKTNGITA) is disordered. Positions 595-609 (EQGTDNPAFNNMEMT) are enriched in polar residues.

It belongs to the sodium:solute symporter (SSF) (TC 2.A.21) family. In the gastrula and neurula stages, expressed in the gastrula anterior endoderm and in the entire circumference of the blastopore lip superficial endoderm. At tailbud stages, abundant expression observed in the ventral midgut region. As development proceeds expression becomes restricted to the liver diverticulum and ultimately to the presumptive gallbladder, by tadpole stage 35. Also present in pronephros and the tip of the tail.

The protein localises to the apical cell membrane. The enzyme catalyses (S)-lactate(out) + 2 Na(+)(out) = (S)-lactate(in) + 2 Na(+)(in). It catalyses the reaction propanoate(out) + 2 Na(+)(out) = propanoate(in) + 2 Na(+)(in). The catalysed reaction is pyruvate(out) + 2 Na(+)(out) = pyruvate(in) + 2 Na(+)(in). It carries out the reaction acetate(out) + 2 Na(+)(out) = acetate(in) + 2 Na(+)(in). The enzyme catalyses butanoate(out) + 2 Na(+)(out) = butanoate(in) + 2 Na(+)(in). It catalyses the reaction nicotinate(out) + 2 Na(+)(out) = nicotinate(in) + 2 Na(+)(in). The catalysed reaction is (R)-3-hydroxybutanoate(out) + 2 Na(+)(out) = (R)-3-hydroxybutanoate(in) + 2 Na(+)(in). It carries out the reaction acetoacetate(out) + 2 Na(+)(out) = acetoacetate(in) + 2 Na(+)(in). The enzyme catalyses 4-methyl-2-oxopentanoate(out) + 2 Na(+)(out) = 4-methyl-2-oxopentanoate(in) + 2 Na(+)(in). It catalyses the reaction 5-oxo-L-proline(out) + 2 Na(+)(out) = 5-oxo-L-proline(in) + 2 Na(+)(in). The catalysed reaction is iodide(out) = iodide(in). It carries out the reaction chloride(in) = chloride(out). The enzyme catalyses nitrate(in) = nitrate(out). It catalyses the reaction bromide(in) = bromide(out). Acts as an electrogenic sodium (Na(+)) and chloride (Cl-)-dependent sodium-coupled solute transporter, including transport of monocarboxylates (short-chain fatty acids including L-lactate, D-lactate, pyruvate, acetate, propionate, valerate and butyrate), mocarboxylate drugs (nicotinate, benzoate, salicylate and 5-aminosalicylate) and ketone bodies (beta-D-hydroxybutyrate, acetoacetate and alpha-ketoisocaproate), with a Na(+):substrate stoichiometry of between 4:1 and 2:1. Catalyzes passive carrier mediated diffusion of iodide. Mediates iodide transport from the thyrocyte into the colloid lumen through the apical membrane. Mediates sodium-coupled electrogenic transport of pyroglutamate (5-oxo-L-proline). Can mediate the transport of chloride, bromide, iodide and nitrate ions when external concentration of sodium ions is reduced. The polypeptide is Sodium-coupled monocarboxylate transporter 1 (Xenopus laevis (African clawed frog)).